A 102-amino-acid chain; its full sequence is Integration host factor subunit alpha (102 aa).

Belongs to the bacterial histone-like protein family. In terms of assembly, heterodimer of an alpha and a beta chain.

In terms of biological role, this protein is one of the two subunits of integration host factor, a specific DNA-binding protein that functions in genetic recombination as well as in transcriptional and translational control. This chain is Integration host factor subunit alpha, found in Paracoccus denitrificans (strain Pd 1222).